A 132-amino-acid chain; its full sequence is Interleukin-5 (132 aa).

The signal sequence occupies residues 1 to 19 (MHLRLTLVALGAAYVCANA). Residues Asn74 and Asn88 are each glycosylated (N-linked (GlcNAc...) asparagine).

Belongs to the IL-5 family. As to quaternary structure, homodimer; disulfide-linked. Interacts with IL5RA. Interacts with CSF2RB.

It is found in the secreted. In terms of biological role, homodimeric cytokine expressed predominantly by T-lymphocytes and NK cells that plays an important role in the survival, differentiation, and chemotaxis of eosinophils. Also acts on activated and resting B-cells to induce immunoglobulin production, growth, and differentiation. Mechanistically, exerts its biological effects through a receptor composed of IL5RA subunit and the cytokine receptor common subunit beta/CSF2RB. Binding to the receptor leads to activation of various kinases including LYN, SYK and JAK2 and thereby propagates signals through the RAS-MAPK and JAK-STAT5 pathways respectively. This Ovis aries (Sheep) protein is Interleukin-5 (IL5).